Reading from the N-terminus, the 403-residue chain is Aminomethyltransferase, mitochondrial (403 aa).

A mitochondrion-targeting transit peptide spans 1–28; that stretch reads MQRAVSVVARLGFRLQAFPPALCRPLSC. Substrate-binding residues include glutamate 232, arginine 261, and tyrosine 399.

This sequence belongs to the GcvT family. As to quaternary structure, the glycine cleavage system is composed of four proteins: P, T, L and H.

The protein resides in the mitochondrion. The enzyme catalyses N(6)-[(R)-S(8)-aminomethyldihydrolipoyl]-L-lysyl-[protein] + (6S)-5,6,7,8-tetrahydrofolate = N(6)-[(R)-dihydrolipoyl]-L-lysyl-[protein] + (6R)-5,10-methylene-5,6,7,8-tetrahydrofolate + NH4(+). The glycine cleavage system catalyzes the degradation of glycine. The sequence is that of Aminomethyltransferase, mitochondrial from Homo sapiens (Human).